The primary structure comprises 316 residues: DNA-directed RNA polymerase III subunit RPC6 (316 aa).

The residue at position 2 (alanine 2) is an N-acetylalanine. Glycyl lysine isopeptide (Lys-Gly) (interchain with G-Cter in SUMO2) cross-links involve residues lysine 5 and lysine 7. Residues cysteine 287, cysteine 290, cysteine 296, and cysteine 307 each coordinate [4Fe-4S] cluster.

It belongs to the eukaryotic RPC34/RPC39 RNA polymerase subunit family. Component of the RNA polymerase III complex consisting of 17 subunits: a ten-subunit horseshoe-shaped catalytic core composed of POLR3A/RPC1, POLR3B/RPC2, POLR1C/RPAC1, POLR1D/RPAC2, POLR3K/RPC10, POLR2E/RPABC1, POLR2F/RPABC2, POLR2H/RPABC3, POLR2K/RPABC4 and POLR2L/RPABC5; a mobile stalk composed of two subunits POLR3H/RPC8 and CRCP/RPC9, protruding from the core and functioning primarily in transcription initiation; and additional subunits homologous to general transcription factors of the RNA polymerase II machinery, POLR3C/RPC3-POLR3F/RPC6-POLR3G/RPC7 heterotrimer required for transcription initiation and POLR3D/RPC4-POLR3E/RPC5 heterodimer involved in both transcription initiation and termination. Directly interacts with POLR3C. Interacts with TBP and TFIIIB90 and GTF3C4. Interacts with MAF1. As part of the RNA polymerase III complex, interacts with PKP2.

It is found in the nucleus. In terms of biological role, DNA-dependent RNA polymerase catalyzes the transcription of DNA into RNA using the four ribonucleoside triphosphates as substrates. Specific peripheric component of RNA polymerase III (Pol III) which synthesizes small non-coding RNAs including 5S rRNA, snRNAs, tRNAs and miRNAs from at least 500 distinct genomic loci. Part of POLR3C/RPC3-POLR3F/RPC6-POLR3G/RPC7 heterotrimer that coordinates the dynamics of Pol III stalk and clamp modules during the transition from apo to elongation state. Pol III plays a key role in sensing and limiting infection by intracellular bacteria and DNA viruses, including varicella zoster virus. Acts as a nuclear and cytosolic DNA sensor detecting AT-rich DNA, involved in innate immune response. Can sense non-self dsDNA that serves as template for transcription into dsRNA. The non-self RNA polymerase III transcripts, such as Epstein-Barr virus-encoded RNAs (EBERs) induce type I interferon and NF-kappa-B through the RIG-I pathway. Preferentially binds double-stranded DNA (dsDNA). The sequence is that of DNA-directed RNA polymerase III subunit RPC6 (POLR3F) from Bos taurus (Bovine).